The following is a 140-amino-acid chain: Putative pre-16S rRNA nuclease (140 aa).

It belongs to the YqgF nuclease family.

The protein localises to the cytoplasm. Its function is as follows. Could be a nuclease involved in processing of the 5'-end of pre-16S rRNA. This is Putative pre-16S rRNA nuclease from Serratia proteamaculans (strain 568).